Consider the following 424-residue polypeptide: MGHRVLVYVGALFLILFTIFPSSSALISSPDANPPYPKAISDLKESIVKGLGFQSEEVKVSGFDIRDALVGHSVSYEFDLEIDNKVLPFKLLEDVNRWEYVDLPIFQVEQPSENGLVPMRNKKTSSDDVLPVLAPFQLSGPMELWIQDANNMRLSLPYDVDAGVLKKVILADGAVVTVKGARSVSLRHPIDLPLPLNQSSNEFASGLLSLAEQLRRASTDQESPVLSLRIVGPTSLASTSQSPDNKLKLKRLAPGLVELSSMSKDKRSLSTIGANAMTTVLTPREFTTMWPITSINGSNANLLGFEKLLTSVLGPKAQEKGSFKVLKAKVAAQTFMKIGFGIEKKLKEADVEGLSFPEWRTKPETMRMHFEVLAKVDGENVIPENVMRVDPIPLEDTIAQNVITGNVTMSKLPIIESPPSPFTL.

Positions 1–25 (MGHRVLVYVGALFLILFTIFPSSSA) are cleaved as a signal peptide. N-linked (GlcNAc...) asparagine glycosylation is found at N197, N296, and N406.

Restricted to pollen grains at high levels.

The protein resides in the endoplasmic reticulum. Its function is as follows. Involved in the regulation of pollen surface morphology, probably by modulating the secretion of proteins and/or lipids during pollen development. This Arabidopsis thaliana (Mouse-ear cress) protein is Protein TUNICAMYCIN INDUCED 1.